Reading from the N-terminus, the 146-residue chain is MDDQRPKNIFLLCRDSGISFDDLRLHCIFCAKVLTTAELSAFALRELNVVWRTGAPYGACARCLLLQGIVRRLKHWDYSLYVEGVEEETKQSIDTQQVRCYMCHKPLVKEEKDRHRNERRRLHCIAGYWRGSCQYCWLRCTVRIPQ.

Zinc fingers lie at residues 27–63 and 100–136; these read CIFCAKVLTTAELSAFALRELNVVWRTGAPYGACARC and CYMCHKPLVKEEKDRHRNERRRLHCIAGYWRGSCQYC.

It belongs to the papillomaviridae E6 protein family. Forms homodimers. Interacts with ubiquitin-protein ligase UBE3A/E6-AP; this interaction stimulates UBE3A ubiquitin activity. Interacts with host TP53 and EP300; this interaction inhibits TP53 activity.

The protein localises to the host cytoplasm. Its subcellular location is the host nucleus. In terms of biological role, plays a major role in the induction and maintenance of cellular transformation. E6 associates with host UBE3A/E6-AP ubiquitin-protein ligase and modulates its activity. Sequesters tumor suppressor TP53 in the host cytoplasm and modulates its activity by interacting with host EP300 that results in the reduction of TP53 acetylation and activation. In turn, apoptosis induced by DNA damage is inhibited. E6 also protects host keratinocytes from apoptosis by mediating the degradation of host BAK1. May also inhibit host immune response. The sequence is that of Protein E6 from Homo sapiens (Human).